Consider the following 75-residue polypeptide: UPF0352 protein ESA_01049 (75 aa).

The protein belongs to the UPF0352 family.

The polypeptide is UPF0352 protein ESA_01049 (Cronobacter sakazakii (strain ATCC BAA-894) (Enterobacter sakazakii)).